A 361-amino-acid polypeptide reads, in one-letter code: Uroporphyrinogen decarboxylase (361 aa).

Residues 27 to 31, Asp-77, Tyr-154, Thr-209, and His-327 contribute to the substrate site; that span reads RQAGR.

It belongs to the uroporphyrinogen decarboxylase family. In terms of assembly, homodimer.

It is found in the cytoplasm. It carries out the reaction uroporphyrinogen III + 4 H(+) = coproporphyrinogen III + 4 CO2. The protein operates within porphyrin-containing compound metabolism; protoporphyrin-IX biosynthesis; coproporphyrinogen-III from 5-aminolevulinate: step 4/4. In terms of biological role, catalyzes the decarboxylation of four acetate groups of uroporphyrinogen-III to yield coproporphyrinogen-III. This is Uroporphyrinogen decarboxylase from Coxiella burnetii (strain Dugway 5J108-111).